The following is a 514-amino-acid chain: Threonine synthase (514 aa).

Lys117 is modified (N6-(pyridoxal phosphate)lysine). Positions 270, 271, 272, and 274 each coordinate pyridoxal 5'-phosphate. Ser319 and Ser321 each carry phosphoserine. Thr449 provides a ligand contact to pyridoxal 5'-phosphate.

It belongs to the threonine synthase family. Pyridoxal 5'-phosphate is required as a cofactor.

It catalyses the reaction O-phospho-L-homoserine + H2O = L-threonine + phosphate. The protein operates within amino-acid biosynthesis; L-threonine biosynthesis; L-threonine from L-aspartate: step 5/5. Catalyzes the gamma-elimination of phosphate from L-phosphohomoserine and the beta-addition of water to produce L-threonine. The polypeptide is Threonine synthase (thrc) (Schizosaccharomyces pombe (strain 972 / ATCC 24843) (Fission yeast)).